The chain runs to 363 residues: Peptide chain release factor 2 (363 aa).

An N5-methylglutamine modification is found at Gln-251.

Belongs to the prokaryotic/mitochondrial release factor family. Methylated by PrmC. Methylation increases the termination efficiency of RF2.

The protein localises to the cytoplasm. Peptide chain release factor 2 directs the termination of translation in response to the peptide chain termination codons UGA and UAA. The protein is Peptide chain release factor 2 (prfB) of Helicobacter pylori (strain ATCC 700392 / 26695) (Campylobacter pylori).